A 297-amino-acid polypeptide reads, in one-letter code: HTH-type transcriptional regulator ArgP (297 aa).

The HTH lysR-type domain maps to 4-60; that stretch reads PDYRTLQALDAVIRERGFERAAQKLCITQSAVSQRIKQLENMFGQPLLVRTVPPRPT. Positions 21–40 form a DNA-binding region, H-T-H motif; sequence FERAAQKLCITQSAVSQRIK.

This sequence belongs to the LysR transcriptional regulatory family. In terms of assembly, homodimer.

Functionally, controls the transcription of genes involved in arginine and lysine metabolism. The polypeptide is HTH-type transcriptional regulator ArgP (Klebsiella pneumoniae subsp. pneumoniae (strain ATCC 700721 / MGH 78578)).